Consider the following 193-residue polypeptide: Endoribonuclease YbeY (193 aa).

Residues H109, H113, and H119 each coordinate Zn(2+). The segment at G143–T193 is disordered. Positions R147–T163 are enriched in basic and acidic residues. The span at R164 to G181 shows a compositional bias: low complexity.

Belongs to the endoribonuclease YbeY family. The cofactor is Zn(2+).

It localises to the cytoplasm. In terms of biological role, single strand-specific metallo-endoribonuclease involved in late-stage 70S ribosome quality control and in maturation of the 3' terminus of the 16S rRNA. This chain is Endoribonuclease YbeY, found in Anaeromyxobacter dehalogenans (strain 2CP-C).